The chain runs to 295 residues: Malonyl-[acyl-carrier protein] O-methyltransferase (295 aa).

It belongs to the methyltransferase superfamily.

The enzyme catalyses malonyl-[ACP] + S-adenosyl-L-methionine = malonyl-[ACP] methyl ester + S-adenosyl-L-homocysteine. Its pathway is cofactor biosynthesis; biotin biosynthesis. Its function is as follows. Converts the free carboxyl group of a malonyl-thioester to its methyl ester by transfer of a methyl group from S-adenosyl-L-methionine (SAM). It allows to synthesize pimeloyl-ACP via the fatty acid synthetic pathway. This is Malonyl-[acyl-carrier protein] O-methyltransferase from Halorhodospira halophila (strain DSM 244 / SL1) (Ectothiorhodospira halophila (strain DSM 244 / SL1)).